Consider the following 228-residue polypeptide: 3,4-dihydroxy-2-butanone 4-phosphate synthase (228 aa).

D-ribulose 5-phosphate is bound by residues 37 to 38 (RE), aspartate 42, 150 to 154 (RRGHT), and glutamate 174. Mg(2+) is bound at residue glutamate 38. Histidine 153 serves as a coordination point for Mg(2+).

This sequence belongs to the DHBP synthase family. In terms of assembly, homodimer. It depends on Mg(2+) as a cofactor. The cofactor is Mn(2+).

The catalysed reaction is D-ribulose 5-phosphate = (2S)-2-hydroxy-3-oxobutyl phosphate + formate + H(+). Its pathway is cofactor biosynthesis; riboflavin biosynthesis; 2-hydroxy-3-oxobutyl phosphate from D-ribulose 5-phosphate: step 1/1. Its function is as follows. Catalyzes the conversion of D-ribulose 5-phosphate to formate and 3,4-dihydroxy-2-butanone 4-phosphate. In Photobacterium profundum (strain SS9), this protein is 3,4-dihydroxy-2-butanone 4-phosphate synthase.